The primary structure comprises 124 residues: Small ribosomal subunit protein bS6 (124 aa).

The protein belongs to the bacterial ribosomal protein bS6 family.

In terms of biological role, binds together with bS18 to 16S ribosomal RNA. This is Small ribosomal subunit protein bS6 from Actinobacillus pleuropneumoniae serotype 5b (strain L20).